We begin with the raw amino-acid sequence, 332 residues long: L-lactate dehydrogenase A-like 6A (332 aa).

Residue A2 is modified to N-acetylalanine. 2 positions are modified to N6-acetyllysine; alternate: K5 and K57. K5 is modified (N6-succinyllysine; alternate). Residue 29–57 (GSVGVACAISILLKGLSDELVLVDVDEGK) coordinates NAD(+). Residue K57 forms a Glycyl lysine isopeptide (Lys-Gly) (interchain with G-Cter in SUMO2); alternate linkage. Position 81 is an N6-acetyllysine (K81). NAD(+) is bound at residue R99. R106 lines the substrate pocket. At K118 the chain carries N6-acetyllysine; alternate. K118 bears the N6-succinyllysine; alternate mark. An NAD(+)-binding site is contributed by N138. N138 and R169 together coordinate substrate. H193 functions as the Proton acceptor in the catalytic mechanism. K232 is subject to N6-acetyllysine. Y239 is subject to Phosphotyrosine. The residue at position 243 (K243) is an N6-acetyllysine. Residue T248 participates in substrate binding. T309 carries the post-translational modification Phosphothreonine. The residue at position 318 (K318) is an N6-acetyllysine; alternate. Residue K318 is modified to N6-succinyllysine; alternate. T322 is subject to Phosphothreonine.

Belongs to the LDH/MDH superfamily. LDH family. Testis-specific.

The protein localises to the cytoplasm. The enzyme catalyses (S)-lactate + NAD(+) = pyruvate + NADH + H(+). It participates in fermentation; pyruvate fermentation to lactate; (S)-lactate from pyruvate: step 1/1. Catalyzes the interconversion of L-lactate and pyruvate with nicotinamide adenine dinucleotide NAD(+) as a coenzyme. Significantly increases the transcriptional activity of JUN, when overexpressed. This chain is L-lactate dehydrogenase A-like 6A (LDHAL6A), found in Homo sapiens (Human).